A 241-amino-acid polypeptide reads, in one-letter code: Protein GrpE (241 aa).

The span at 28 to 49 shows a compositional bias: basic and acidic residues; that stretch reads QNCQKEETQTTNKDNQKEDETF. The interval 28–78 is disordered; that stretch reads QNCQKEETQTTNKDNQKEDETFKNQPNKTKQTNTKQQKHLSKESSHQQITK. A compositionally biased stretch (low complexity) spans 50 to 62; the sequence is KNQPNKTKQTNTK.

Belongs to the GrpE family. Homodimer.

The protein localises to the cytoplasm. Functionally, participates actively in the response to hyperosmotic and heat shock by preventing the aggregation of stress-denatured proteins, in association with DnaK and GrpE. It is the nucleotide exchange factor for DnaK and may function as a thermosensor. Unfolded proteins bind initially to DnaJ; upon interaction with the DnaJ-bound protein, DnaK hydrolyzes its bound ATP, resulting in the formation of a stable complex. GrpE releases ADP from DnaK; ATP binding to DnaK triggers the release of the substrate protein, thus completing the reaction cycle. Several rounds of ATP-dependent interactions between DnaJ, DnaK and GrpE are required for fully efficient folding. The polypeptide is Protein GrpE (Aster yellows witches'-broom phytoplasma (strain AYWB)).